The primary structure comprises 376 residues: Serpin B6 (376 aa).

Met-1 bears the N-acetylmethionine mark. Ser-151 is subject to Phosphoserine. N6-acetyllysine is present on Lys-195.

It belongs to the serpin family. Ov-serpin subfamily. As to quaternary structure, forms a complex with the monomeric form of beta-tryptase.

The protein localises to the cytoplasm. Inhibitor of cathepsin G, kallikrein-8 and thrombin. May play an important role in the inner ear in the protection against leakage of lysosomal content during stress. May be involved in the regulation of serine proteinases present in the brain or extravasated from the blood. The chain is Serpin B6 (SERPINB6) from Macaca fascicularis (Crab-eating macaque).